A 181-amino-acid polypeptide reads, in one-letter code: Interleukin-24 (181 aa).

An N-terminal signal peptide occupies residues 1-26; that stretch reads MSWGLQILPCLSLILLLWNQVPGLEG. Cys34 and Cys81 are oxidised to a cystine. Asn74 is a glycosylation site (N-linked (GlcNAc...) asparagine). A Glycyl lysine isopeptide (Lys-Gly) (interchain with G-Cter in ubiquitin) cross-link involves residue Lys97.

This sequence belongs to the IL-10 family. Glycosylated. Post-translationally, ubiquitination at Lys-97 promotes proteasomal degradation. Selectively expressed by Th2 cells. Expressed in the liver.

It is found in the secreted. Multifunctional cytokine mainly produced by T-cells that plays a regulatory role in immune response, tissue homeostasis, host defense, and oncogenesis. Possesses antiviral functions and induces the type I interferon response during influenza infection. Signals through two receptor complexes IL20RA/IL20RB or IL20RB/IL22RA1. In turn, stimulates the JAK1-STAT3 and MAPK pathways and promotes the secretion of pro-inflammatory mediators including IL8 and MMP1. Intracellularly, maintains endoplasmic reticulum homeostasis by restricting the eIF2alpha-CHOP pathway-mediated stress signal. In addition, acts as a quality control mechanism for the ubiquitin proteasome system by alerting the cell to proteasome dysfunction through activation of PKR/EIF2AK2. The sequence is that of Interleukin-24 (Il24) from Mus musculus (Mouse).